Consider the following 400-residue polypeptide: Queuine tRNA-ribosyltransferase catalytic subunit 1 (400 aa).

Catalysis depends on Asp-103, which acts as the Proton acceptor. Residues 103-107 (DSGGF), Asp-157, Gln-200, and Gly-227 each bind queuine. Residues 258 to 264 (GVGYAVD) form an RNA binding region. The active-site Nucleophile is Asp-277. The segment at 282–286 (TRTAR) is RNA binding; important for wobble base 34 recognition. 4 residues coordinate Zn(2+): Cys-315, Cys-317, Cys-320, and His-345.

The protein belongs to the queuine tRNA-ribosyltransferase family. Heterodimer of a catalytic subunit qtrt1 and an accessory subunit qtrt2. Requires Zn(2+) as cofactor.

Its subcellular location is the cytoplasm. The protein localises to the mitochondrion outer membrane. It catalyses the reaction guanosine(34) in tRNA + queuine = queuosine(34) in tRNA + guanine. In terms of biological role, catalytic subunit of the queuine tRNA-ribosyltransferase (TGT) that catalyzes the base-exchange of a guanine (G) residue with queuine (Q) at position 34 (anticodon wobble position) in tRNAs with GU(N) anticodons (tRNA-Asp, -Asn, -His and -Tyr), resulting in the hypermodified nucleoside queuosine (7-(((4,5-cis-dihydroxy-2-cyclopenten-1-yl)amino)methyl)-7-deazaguanosine). Catalysis occurs through a double-displacement mechanism. The nucleophile active site attacks the C1' of nucleotide 34 to detach the guanine base from the RNA, forming a covalent enzyme-RNA intermediate. The proton acceptor active site deprotonates the incoming queuine, allowing a nucleophilic attack on the C1' of the ribose to form the product. This chain is Queuine tRNA-ribosyltransferase catalytic subunit 1, found in Danio rerio (Zebrafish).